A 396-amino-acid chain; its full sequence is Purine ribonucleoside efflux pump NepI (396 aa).

Over Met-1–Ala-21 the chain is Cytoplasmic. A helical membrane pass occupies residues Val-22–Leu-42. The Periplasmic segment spans residues Leu-43 to Glu-54. A helical transmembrane segment spans residues Gly-55–Ile-75. At Thr-76–Arg-85 the chain is on the cytoplasmic side. A helical membrane pass occupies residues Tyr-86–Asn-106. A topological domain (periplasmic) is located at residue Ser-107. Residues Phe-108–Met-128 traverse the membrane as a helical segment. At Ser-129–Ser-147 the chain is on the cytoplasmic side. The helical transmembrane segment at Val-148–Gly-168 threads the bilayer. Topologically, residues Glu-169–Asn-175 are periplasmic. The chain crosses the membrane as a helical span at residues Val-176 to Pro-196. At Ser-197–Arg-215 the chain is on the cytoplasmic side. Residues Pro-216–Phe-236 form a helical membrane-spanning segment. Residues Thr-237–Thr-255 lie on the Periplasmic side of the membrane. The helical transmembrane segment at Leu-256–Leu-276 threads the bilayer. The Cytoplasmic segment spans residues Lys-277–Lys-281. The helical transmembrane segment at Leu-282–Gly-302 threads the bilayer. At Ser-303–Lys-305 the chain is on the periplasmic side. The chain crosses the membrane as a helical span at residues Ile-306–Trp-326. The Cytoplasmic segment spans residues Ser-327 to Ser-343. A helical transmembrane segment spans residues Ile-344 to Leu-364. Topologically, residues Asp-365–Asn-366 are periplasmic. A helical membrane pass occupies residues Ile-367–Val-387. Topologically, residues Thr-388–Ser-396 are cytoplasmic.

Belongs to the major facilitator superfamily. DHA1 family. NepI (TC 2.A.1.2.26) subfamily.

Its subcellular location is the cell inner membrane. It catalyses the reaction inosine(in) + H(+)(out) = inosine(out) + H(+)(in). The catalysed reaction is guanosine(in) + H(+)(out) = guanosine(out) + H(+)(in). Involved in the efflux of purine ribonucleosides, such as inosine and guanosine. This Escherichia coli O1:K1 / APEC protein is Purine ribonucleoside efflux pump NepI.